The chain runs to 267 residues: Phosphate import ATP-binding protein PstB (267 aa).

Positions 21–262 constitute an ABC transporter domain; that stretch reads VAARNLDFYY…PSKQQTEDYI (242 aa). 53–60 is an ATP binding site; that stretch reads GPSGCGKS.

Belongs to the ABC transporter superfamily. Phosphate importer (TC 3.A.1.7) family. In terms of assembly, the complex is composed of two ATP-binding proteins (PstB), two transmembrane proteins (PstC and PstA) and a solute-binding protein (PstS).

It is found in the cell inner membrane. It catalyses the reaction phosphate(out) + ATP + H2O = ADP + 2 phosphate(in) + H(+). Functionally, part of the ABC transporter complex PstSACB involved in phosphate import. Responsible for energy coupling to the transport system. In Xanthomonas axonopodis pv. citri (strain 306), this protein is Phosphate import ATP-binding protein PstB.